The following is a 211-amino-acid chain: Cytidylate kinase (211 aa).

ATP is bound at residue 7–15; that stretch reads GPAASGKGT.

Belongs to the cytidylate kinase family. Type 1 subfamily.

It localises to the cytoplasm. The enzyme catalyses CMP + ATP = CDP + ADP. It carries out the reaction dCMP + ATP = dCDP + ADP. The polypeptide is Cytidylate kinase (Rhodopseudomonas palustris (strain BisA53)).